A 394-amino-acid polypeptide reads, in one-letter code: Na(+)/H(+) antiporter NhaA (394 aa).

The next 11 helical transmembrane spans lie at 14–34 (AGGL…NSAL), 59–79 (LLLW…GLEV), 95–115 (VFPA…YLLF), 125–145 (GWAI…ALLG), 154–174 (VFLL…IALF), 179–199 (VSLQ…YMNW), 213–233 (LVLW…GVIV), 254–274 (GLHP…NAGV), 292–312 (IATG…WLAV), 328–348 (IFAV…IASL), and 363–383 (LGIL…LRLV).

Belongs to the NhaA Na(+)/H(+) (TC 2.A.33) antiporter family.

It is found in the cell inner membrane. It catalyses the reaction Na(+)(in) + 2 H(+)(out) = Na(+)(out) + 2 H(+)(in). Its function is as follows. Na(+)/H(+) antiporter that extrudes sodium in exchange for external protons. This chain is Na(+)/H(+) antiporter NhaA, found in Yersinia pestis bv. Antiqua (strain Antiqua).